Here is a 724-residue protein sequence, read N- to C-terminus: Eukaryotic elongation factor 2 kinase (724 aa).

Position 2 is an N-acetylalanine (A2). Residue S27 is modified to Phosphoserine. At S61 the chain carries Phosphoserine; by autocatalysis. A phosphoserine mark is found at S70, S73, and S77. Positions 80–93 (FKEAWKHAIEKAKH) are calmodulin-binding. In terms of domain architecture, Alpha-type protein kinase spans 115–325 (RYNAVTGEWL…ICQSMGLTPF (211 aa)). S242 carries the phosphoserine modification. 295-301 (GDGNLGV) contributes to the ATP binding site. 2 positions are modified to phosphothreonine; by autocatalysis: T347 and T352. Residues 353–476 (EEKCGSPRIR…HESDEDSLGS (124 aa)) form a disordered region. S358 is modified (phosphoserine; by MAPK13 and CDK1). Over residues 358–376 (SPRIRTLSSSRPPLLLRLS) the composition is skewed to low complexity. A Phosphoserine; by autocatalysis, RPS6KA1 and RPS6KB1 modification is found at S365. A compositionally biased stretch (polar residues) spans 385 to 403 (SDVTFDSLPSSPSSATPHS). S391 is subject to Phosphoserine. S397 is subject to Phosphoserine; by AMPK. Basic and acidic residues-rich tracts occupy residues 421–435 (GPRD…RDSE) and 444–469 (SEKR…RHES). Residues S434, S444, and S469 each carry the phosphoserine modification. S473 carries the phosphoserine; by autocatalysis modification. S476 is subject to Phosphoserine. Position 499 is a phosphoserine; by PKA (S499).

The protein belongs to the protein kinase superfamily. Alpha-type protein kinase family. Monomer or homodimer. Interacts with Calmodulin/CALM1; this interaction is strictly required for phosphorylation activity. Autophosphorylated at multiple residues, Thr-347 being the major site. Phosphorylated by AMP-activated protein kinase AMPK at Ser-397 leading to EEF2K activation and protein synthesis inhibition. Phosphorylated by TRPM7 at Ser-77 resulting in improved protein stability, higher EE2F phosphorylated and subsequently reduced rate of protein synthesis. Phosphorylation by other kinases such as CDK1 and MAPK13 at Ser-358 or RPS6KA1 and RPS6KB1 at Ser-365 instead decrease EEF2K activity and promote protein synthesis. Ubiquitously expressed. Particularly abundant in skeletal muscle and heart.

The catalysed reaction is [translation elongation factor 2] + ATP = [translation elongation factor 2]-phosphate + ADP + H(+). Undergoes calcium/calmodulin-dependent intramolecular autophosphorylation, and this results in it becoming partially calcium/calmodulin-independent. Its function is as follows. Threonine kinase that regulates protein synthesis by controlling the rate of peptide chain elongation. Upon activation by a variety of upstream kinases including AMPK or TRPM7, phosphorylates the elongation factor EEF2 at a single site, renders it unable to bind ribosomes and thus inactive. In turn, the rate of protein synthesis is reduced. The protein is Eukaryotic elongation factor 2 kinase (Eef2k) of Mus musculus (Mouse).